Consider the following 141-residue polypeptide: Nucleoside diphosphate kinase (141 aa).

ATP contacts are provided by K11, F59, R87, T93, R104, and N114. H117 (pros-phosphohistidine intermediate) is an active-site residue.

Belongs to the NDK family. As to quaternary structure, homotetramer. Mg(2+) serves as cofactor.

It is found in the cytoplasm. It carries out the reaction a 2'-deoxyribonucleoside 5'-diphosphate + ATP = a 2'-deoxyribonucleoside 5'-triphosphate + ADP. The enzyme catalyses a ribonucleoside 5'-diphosphate + ATP = a ribonucleoside 5'-triphosphate + ADP. Major role in the synthesis of nucleoside triphosphates other than ATP. The ATP gamma phosphate is transferred to the NDP beta phosphate via a ping-pong mechanism, using a phosphorylated active-site intermediate. This chain is Nucleoside diphosphate kinase, found in Paraburkholderia phytofirmans (strain DSM 17436 / LMG 22146 / PsJN) (Burkholderia phytofirmans).